Consider the following 291-residue polypeptide: U7 snRNA-associated Sm-like protein LSm11 (291 aa).

Residues 55–84 (ARGRARGAQRGQSRGPGGKRKGRKPEPDPE) are disordered. Residues 124 to 199 (SPLGELNRCV…LTLTRLFDRL (76 aa)) enclose the Sm domain. The tract at residues 155 to 289 (GFIVAFDKFW…RGENVLLVHI (135 aa)) is SM. Residues 203–266 (EPGSHDPAKG…RRNRKEKVDY (64 aa)) are disordered. Residues 251–261 (NRPKQRRRNRK) show a composition bias toward basic residues.

The protein belongs to the snRNP Sm proteins family. As to quaternary structure, component of the heptameric ring U7 snRNP complex.

The protein localises to the nucleus. Component of the U7 snRNP complex that is involved in the histone 3'-end pre-mRNA processing. Increases U7 snRNA levels but not histone 3'-end pre-mRNA processing activity, when overexpressed. Binds specifically to the Sm-binding site of U7 snRNA. This chain is U7 snRNA-associated Sm-like protein LSm11, found in Xenopus laevis (African clawed frog).